Reading from the N-terminus, the 1381-residue chain is Protein HEG homolog 1 (1381 aa).

A signal peptide spans 1 to 29 (MASPRASRWPPPLLLLLLPLLLLPPAAPG). Residues 24-108 (PPAAPGTRDP…APRGGSADAA (85 aa)) form a disordered region. Residues 25-37 (PAAPGTRDPPPSP) are compositionally biased toward pro residues. The Extracellular portion of the chain corresponds to 30–1248 (TRDPPPSPAR…GLNCGNPYQL (1219 aa)). Over residues 38-52 (ARRALSLAPLAGAGL) the composition is skewed to low complexity. The segment covering 55 to 74 (QLERRPEREPPPTPPRERRG) has biased composition (basic and acidic residues). Thr-67 carries an O-linked (GalNAc...) threonine glycan. Low complexity predominate over residues 93–105 (RGPSGRAPRGGSA). 4 N-linked (GlcNAc...) asparagine glycosylation sites follow: Asn-123, Asn-159, Asn-180, and Asn-314. Over residues 301–316 (DLSSSSESTEKLNNST) the composition is skewed to low complexity. 2 disordered regions span residues 301-325 (DLSS…SVSQ) and 376-447 (PSAV…RSVA). The segment covering 424–444 (LASSSEVQNGSPMSQTETVSR) has biased composition (polar residues). N-linked (GlcNAc...) asparagine glycosylation is found at Asn-462, Asn-520, and Asn-610. The interval 491–529 (STVQSGGSHTALGDRSYSESSSTSSSESLNSSAPRGERS) is disordered. Positions 508-522 (SESSSTSSSESLNSS) are enriched in low complexity. Disordered stretches follow at residues 612 to 680 (SSYD…PLPS), 706 to 757 (SDAS…PVTS), and 774 to 830 (QTAD…TLPA). The span at 620–648 (QPSTESPVLHTSNLPSYTPTINMPNTSVV) shows a compositional bias: polar residues. 2 stretches are compositionally biased toward low complexity: residues 657–680 (SDSS…PLPS) and 706–748 (SDAS…PVLP). 2 stretches are compositionally biased toward polar residues: residues 774-784 (QTADLKSQSTP) and 792-809 (ESKS…TKAV). Residues 810–825 (TTNSPLPPSLTESSTE) show a composition bias toward low complexity. The EGF-like 1 domain occupies 985-1023 (SVNSCAVNPCLHNGECVADNTSRGYHCRCPPSWQGDDCS). 6 disulfide bridges follow: Cys-989–Cys-1000, Cys-994–Cys-1011, Cys-1013–Cys-1022, Cys-1029–Cys-1040, Cys-1034–Cys-1049, and Cys-1051–Cys-1062. The region spanning 1025–1063 (DVNECLSNPCPSTAMCNNTQGSFICKCPVGYQLEKGICN) is the EGF-like 2; calcium-binding domain. A glycan (N-linked (GlcNAc...) asparagine) is linked at Asn-1137. The chain crosses the membrane as a helical span at residues 1249–1269 (ITVVIAAAGGGLLLILGIALI). Residues 1270-1381 (VTCCRKNKND…SDESRRRDYF (112 aa)) are Cytoplasmic-facing. A Phosphoserine modification is found at Ser-1359.

Interacts with CCM2 and KRIT1; KRIT1 markedly facilitates interaction with CCM2.

Its subcellular location is the cell membrane. The protein resides in the cell junction. The protein localises to the secreted. Receptor component of the CCM signaling pathway which is a crucial regulator of heart and vessel formation and integrity. May act through the stabilization of endothelial cell junctions. This Homo sapiens (Human) protein is Protein HEG homolog 1 (HEG1).